The chain runs to 153 residues: Putative pre-16S rRNA nuclease (153 aa).

It belongs to the YqgF nuclease family.

It localises to the cytoplasm. Functionally, could be a nuclease involved in processing of the 5'-end of pre-16S rRNA. The protein is Putative pre-16S rRNA nuclease of Prochlorococcus marinus (strain SARG / CCMP1375 / SS120).